The chain runs to 230 residues: Aspartate and serine-rich protein (230 aa).

3 N-linked (GlcNAc...) asparagine glycosylation sites follow: asparagine 17, asparagine 132, and asparagine 139. The disordered stretch occupies residues 112 to 230; sequence LNGGATAGGV…DSDSNDTDSD (119 aa). Positions 126–140 are enriched in acidic residues; it reads DTDESSNDTDEDSND. Positions 141 to 161 are enriched in basic and acidic residues; sequence SDSKDTDSDSKDTDSDSKDSD. N-linked (GlcNAc...) asparagine glycosylation is found at asparagine 163 and asparagine 170. Over residues 173–223 the composition is skewed to basic and acidic residues; sequence DSKDTDSDSKDSDSKDTDSDSKDTDSDSKDSDSKDTDSDSKDTDSDSKDSD. An N-linked (GlcNAc...) asparagine glycan is attached at asparagine 225.

As to expression, component of the acid-insoluble organic matrix of calcified layers of the shell (at protein level).

The protein resides in the secreted. This is Aspartate and serine-rich protein from Lottia gigantea (Giant owl limpet).